A 534-amino-acid chain; its full sequence is Bifunctional pantoate ligase/cytidylate kinase (534 aa).

The segment at 1 to 302 (MRLLTTVAAL…LGSTRLIDNT (302 aa)) is pantoate--beta-alanine ligase. 48-55 (MGSLHQGH) is an ATP binding site. Histidine 55 (proton donor) is an active-site residue. Glutamine 79 contributes to the (R)-pantoate binding site. Glutamine 79 is a binding site for beta-alanine. 172-175 (GQKD) is an ATP binding site. Residue glutamine 178 participates in (R)-pantoate binding. ATP is bound by residues valine 201 and 209–212 (CSSR). The tract at residues 303 to 534 (ILRDRQPIIA…DYYQQRLSQW (232 aa)) is cytidylate kinase.

The protein in the N-terminal section; belongs to the pantothenate synthetase family. In the C-terminal section; belongs to the cytidylate kinase family. Type 1 subfamily.

It is found in the cytoplasm. The catalysed reaction is (R)-pantoate + beta-alanine + ATP = (R)-pantothenate + AMP + diphosphate + H(+). It catalyses the reaction CMP + ATP = CDP + ADP. It carries out the reaction dCMP + ATP = dCDP + ADP. It participates in cofactor biosynthesis; (R)-pantothenate biosynthesis; (R)-pantothenate from (R)-pantoate and beta-alanine: step 1/1. Functionally, catalyzes the condensation of pantoate with beta-alanine in an ATP-dependent reaction via a pantoyl-adenylate intermediate. Its function is as follows. Catalyzes the transfer of a phosphate group from ATP to either CMP or dCMP to form CDP or dCDP and ADP, respectively. This Nostoc sp. (strain PCC 7120 / SAG 25.82 / UTEX 2576) protein is Bifunctional pantoate ligase/cytidylate kinase.